We begin with the raw amino-acid sequence, 452 residues long: Neuronal acetylcholine receptor subunit alpha-5 (452 aa).

The N-terminal stretch at 1–27 is a signal peptide; that stretch reads MVQLLAGRWRPTGARRGTRGGLPELSS. Residues 28 to 239 are Extracellular-facing; the sequence is AAKHEDSLFR…VIKRLPLFYT (212 aa). Asparagine 140, asparagine 168, and asparagine 214 each carry an N-linked (GlcNAc...) asparagine glycan. An intrachain disulfide couples cysteine 155 to cysteine 169. Cysteine 219 and cysteine 220 form a disulfide bridge. 3 consecutive transmembrane segments (helical) span residues 240–260, 269–289, and 302–322; these read LFLI…FYLP, LCTS…EIIP, and LVFT…AINI. The Cytoplasmic portion of the chain corresponds to 323–414; that stretch reads HHRSSSTHNA…KFIAQVLDRM (92 aa). The helical transmembrane segment at 415–435 threads the bilayer; sequence FLWTFLLVSIIGTLGLFVPVI. The Extracellular segment spans residues 436–452; it reads YKWANIIVPVHIGNTIK.

It belongs to the ligand-gated ion channel (TC 1.A.9) family. Acetylcholine receptor (TC 1.A.9.1) subfamily. Alpha-5/CHRNA5 sub-subfamily. As to quaternary structure, neuronal AChR that forms heteropentamers composed of two different type of subunits: alpha and non-alpha (beta). CHRNA5/alpha-5 subunit is only able to form functional nAChRs when co-assembled with another alpha subunit, can be combined to CHRNA4/alpha-4 or CHRNA3/alpha-3 and CHRNB4/beta-4 or CHRNB2/beta-2 to give rise to functional receptors. Interacts with LYPD6.

It is found in the synaptic cell membrane. It localises to the cell membrane. It carries out the reaction Ca(2+)(in) = Ca(2+)(out). It catalyses the reaction K(+)(in) = K(+)(out). The enzyme catalyses Na(+)(in) = Na(+)(out). With respect to regulation, activated by a myriad of ligands such as acetylcholine, cytisine, nicotine, choline and epibatidine. Its function is as follows. Component of neuronal acetylcholine receptors (nAChRs) that function as pentameric, ligand-gated cation channels with high calcium permeability among other activities. nAChRs are excitatory neurotrasnmitter receptors formed by a collection of nAChR subunits known to mediate synaptic transmission in the nervous system and the neuromuscular junction. Each nAchR subunit confers differential attributes to channel properties, including activation, deactivation and desensitization kinetics, pH sensitivity, cation permeability, and binding to allosteric modulators. Has an accessory rather than functional role and is only able to form functional nAChRs when co-assembled with another beta subunit. Participates in pentameric assemblies along with CHRNA3, CHRNA4, CHRNB2 and CHRNB4. Increases receptor sensitivity to acetylcholine and nicotine when associated with CHRNA4 and CHRNB2. Plays a role in nicotine addiction. This Rattus norvegicus (Rat) protein is Neuronal acetylcholine receptor subunit alpha-5 (Chrna5).